Consider the following 229-residue polypeptide: tRNA (guanine-N(7)-)-methyltransferase (229 aa).

Residues E62, E87, D114, and D137 each contribute to the S-adenosyl-L-methionine site. D137 is an active-site residue. K141 lines the substrate pocket. Residues 143–148 are interaction with RNA; it reads KHNKRR. Substrate contacts are provided by residues D173 and 208 to 211; that span reads TKFE.

The protein belongs to the class I-like SAM-binding methyltransferase superfamily. TrmB family.

The enzyme catalyses guanosine(46) in tRNA + S-adenosyl-L-methionine = N(7)-methylguanosine(46) in tRNA + S-adenosyl-L-homocysteine. It functions in the pathway tRNA modification; N(7)-methylguanine-tRNA biosynthesis. Functionally, catalyzes the formation of N(7)-methylguanine at position 46 (m7G46) in tRNA. The sequence is that of tRNA (guanine-N(7)-)-methyltransferase from Francisella philomiragia subsp. philomiragia (strain ATCC 25017 / CCUG 19701 / FSC 153 / O#319-036).